The following is a 178-amino-acid chain: ATP-dependent protease subunit HslV (178 aa).

Threonine 7 is a catalytic residue. Residues glycine 162, cysteine 165, and threonine 168 each contribute to the Na(+) site.

Belongs to the peptidase T1B family. HslV subfamily. In terms of assembly, a double ring-shaped homohexamer of HslV is capped on each side by a ring-shaped HslU homohexamer. The assembly of the HslU/HslV complex is dependent on binding of ATP.

The protein localises to the cytoplasm. The enzyme catalyses ATP-dependent cleavage of peptide bonds with broad specificity.. Its activity is regulated as follows. Allosterically activated by HslU binding. In terms of biological role, protease subunit of a proteasome-like degradation complex believed to be a general protein degrading machinery. This chain is ATP-dependent protease subunit HslV, found in Burkholderia ambifaria (strain MC40-6).